Here is a 374-residue protein sequence, read N- to C-terminus: MRADVQNTIEKIQKSLDLLAQRLDVETAPYRLEEFNARVEDPTLWDDPDAAQKLMRERQMLVDAMATHDSIKQEMADNIELIELGEMEDDADVVSDAENALRALEETAAKKELEALLDGEADSNDTFLEVNAGAGGTESCDWASMLARMYVRWAEKKGYKVELQSMSDGDEAGIKSATYKITGLNAYGWLKSESGVHRLVRISPFDSAAKRHTSFSSVWVYPVVDDNIDIEVNPADIRIDTYRSSGAGGQHVNTTDSAVRITHHPTGIVVTSSEKSQHQNRDIAMKALKSRLYQLELDRRNAAINEAHENKGDAGWGNQIRSYVLQPYQMVKDLRTNFETSDTKGVLDGDLDGFMAATLALDASGKTRAEAQNG.

Gln250 carries the post-translational modification N5-methylglutamine.

This sequence belongs to the prokaryotic/mitochondrial release factor family. Post-translationally, methylated by PrmC. Methylation increases the termination efficiency of RF2.

It localises to the cytoplasm. Peptide chain release factor 2 directs the termination of translation in response to the peptide chain termination codons UGA and UAA. The sequence is that of Peptide chain release factor 2 from Roseobacter denitrificans (strain ATCC 33942 / OCh 114) (Erythrobacter sp. (strain OCh 114)).